A 501-amino-acid polypeptide reads, in one-letter code: Probable cytosol aminopeptidase (501 aa).

Mn(2+) is bound by residues Lys272 and Asp277. Lys284 is an active-site residue. Residues Asp295, Asp354, and Glu356 each coordinate Mn(2+). Arg358 is an active-site residue.

The protein belongs to the peptidase M17 family. Requires Mn(2+) as cofactor.

Its subcellular location is the cytoplasm. It carries out the reaction Release of an N-terminal amino acid, Xaa-|-Yaa-, in which Xaa is preferably Leu, but may be other amino acids including Pro although not Arg or Lys, and Yaa may be Pro. Amino acid amides and methyl esters are also readily hydrolyzed, but rates on arylamides are exceedingly low.. The enzyme catalyses Release of an N-terminal amino acid, preferentially leucine, but not glutamic or aspartic acids.. Functionally, presumably involved in the processing and regular turnover of intracellular proteins. Catalyzes the removal of unsubstituted N-terminal amino acids from various peptides. This chain is Probable cytosol aminopeptidase, found in Buchnera aphidicola subsp. Baizongia pistaciae (strain Bp).